The following is a 311-amino-acid chain: CD-NTase-associated protein 12 (311 aa).

The TIR domain maps to 4-121; the sequence is RIFIGSSKEG…LLGITVPQFE (118 aa). The tract at residues 157–311 is STING domain; sequence STVLAIGYFY…RNIVKIIQEE (155 aa). Positions 168, 232, and 249 each coordinate 3',3'-c-di-GMP.

The protein in the C-terminal section; belongs to the bacterial STING family. Forms homodimers; in the presence of c-di-GMP forms filaments with an ordered array of parallel-stacked subunits.

The catalysed reaction is NAD(+) + H2O = ADP-D-ribose + nicotinamide + H(+). Its activity is regulated as follows. NAD(+) hydrolase activity is strongly stimulated by c-di-GMP, weakly by 3'3'-cGAMP, very weakly by c-di-AMP but not at all by 2'3'-cGAMP. Self-association of TIR domains is required for NADase activity. Functionally, effector protein of a CBASS antiviral system with NAD(+) hydrolase activity. CBASS (cyclic oligonucleotide-based antiphage signaling system) provides immunity against bacteriophage. The CD-NTase protein synthesizes cyclic nucleotides in response to infection; these serve as specific second messenger signals. The signals activate a diverse range of effectors, leading to bacterial cell death and thus abortive phage infection. A type I-D CBASS(GG) system. In terms of biological role, binds c-di-GMP, does not bind cUMP-AMP. Upon activation by c-di-GMP forms filaments which hydrolyze NAD(+); filament formation is required for enzyme activation. This chain is CD-NTase-associated protein 12, found in Flavobacterium daejeonense.